Reading from the N-terminus, the 249-residue chain is Phosphoribosylaminoimidazole-succinocarboxamide synthase (249 aa).

Belongs to the SAICAR synthetase family.

The enzyme catalyses 5-amino-1-(5-phospho-D-ribosyl)imidazole-4-carboxylate + L-aspartate + ATP = (2S)-2-[5-amino-1-(5-phospho-beta-D-ribosyl)imidazole-4-carboxamido]succinate + ADP + phosphate + 2 H(+). It participates in purine metabolism; IMP biosynthesis via de novo pathway; 5-amino-1-(5-phospho-D-ribosyl)imidazole-4-carboxamide from 5-amino-1-(5-phospho-D-ribosyl)imidazole-4-carboxylate: step 1/2. This chain is Phosphoribosylaminoimidazole-succinocarboxamide synthase, found in Roseiflexus castenholzii (strain DSM 13941 / HLO8).